The primary structure comprises 299 residues: Maintenance of mitochondrial morphology protein 1 (299 aa).

At 1-15 (MTNIIFSLQPTFTQG) the chain is on the lumenal side. A helical transmembrane segment spans residues 16–36 (LILGQLSVLVLLGLILKYLFL). Over 37–299 (DSTKNPFETT…QEESKRQEEA (263 aa)) the chain is Cytoplasmic. Positions 47–68 (SYHPQFDRKPARKQQAQDSQSQ) are disordered. In terms of domain architecture, SMP-LTD spans 73-281 (DVESLDWFNL…LPGLASVAEA (209 aa)).

This sequence belongs to the MMM1 family. As to quaternary structure, homodimer. Component of the ER-mitochondria encounter structure (ERMES) or MDM complex, composed of MMM1, MDM10, MDM12 and MDM34. An MMM1 homodimer associates with one molecule of MDM12 on each side in a pairwise head-to-tail manner, and the SMP-LTD domains of MMM1 and MDM12 generate a continuous hydrophobic tunnel for phospholipid trafficking.

The protein resides in the endoplasmic reticulum membrane. In terms of biological role, component of the ERMES/MDM complex, which serves as a molecular tether to connect the endoplasmic reticulum (ER) and mitochondria. Components of this complex are involved in the control of mitochondrial shape and protein biogenesis, and function in nonvesicular lipid trafficking between the ER and mitochondria. The MDM12-MMM1 subcomplex functions in the major beta-barrel assembly pathway that is responsible for biogenesis of all outer membrane beta-barrel proteins, and acts in a late step after the SAM complex. The MDM10-MDM12-MMM1 subcomplex further acts in the TOM40-specific pathway after the action of the MDM12-MMM1 complex. Essential for establishing and maintaining the structure of mitochondria and maintenance of mtDNA nucleoids. The sequence is that of Maintenance of mitochondrial morphology protein 1 from Coprinopsis cinerea (strain Okayama-7 / 130 / ATCC MYA-4618 / FGSC 9003) (Inky cap fungus).